The primary structure comprises 240 residues: EF-hand domain-containing protein D2 (240 aa).

The tract at residues 1 to 51 (MATDELASKLSRRLQMEGEGGEATEQPGLNGAAAAAAAEAPDETAQALGSA) is disordered. Residue A2 is modified to N-acetylalanine. S11 bears the Phosphoserine mark. Positions 32–47 (AAAAAAAEAPDETAQA) are enriched in low complexity. Residues S74 and S76 each carry the phosphoserine modification. Y83 carries the post-translational modification Phosphotyrosine. 2 consecutive EF-hand domains span residues 92–127 (KQIK…LGAP) and 128–163 (QTHL…AAAG). Residues D105, D109, E116, D141, D143, D145, K147, and E152 each coordinate Ca(2+). K233 is modified (N6-acetyllysine).

As to quaternary structure, interacts with CASP9; with inactive form. As to expression, detected in thymus, kidney, spleen, lung, liver and brain. Highest abundance in brain and lowest in kidney and thymus.

It localises to the membrane raft. Its function is as follows. May regulate B-cell receptor (BCR)-induced immature and primary B-cell apoptosis. Plays a role as negative regulator of the canonical NF-kappa-B-activating branch. Controls spontaneous apoptosis through the regulation of BCL2L1 abundance. The sequence is that of EF-hand domain-containing protein D2 (Efhd2) from Mus musculus (Mouse).